Reading from the N-terminus, the 219-residue chain is Small ribosomal subunit protein uS3 (219 aa).

Residues 39–107 (LRKFLKKKLH…EVLIDIQEVR (69 aa)) enclose the KH type-2 domain.

The protein belongs to the universal ribosomal protein uS3 family. Part of the 30S ribosomal subunit. Forms a tight complex with proteins S10 and S14.

Its function is as follows. Binds the lower part of the 30S subunit head. Binds mRNA in the 70S ribosome, positioning it for translation. The polypeptide is Small ribosomal subunit protein uS3 (Desulfatibacillum aliphaticivorans).